We begin with the raw amino-acid sequence, 143 residues long: Ninjurin-2 (143 aa).

The Extracellular portion of the chain corresponds to 1–61 (MESDRETIHL…KSVLQQGPFA (61 aa)). Residues 26–38 (NFYATKKSVAESM) form a helix alpha1 region. The tract at residues 39–58 (LDVALFMSNAMRLKSVLQQG) is helix alpha2. Residues 62 to 93 (EYYTTLVTLIIVSLLLQVVISLLLVFIAILNL) traverse the membrane as a helical segment. Over 94-97 (NEVE) the chain is Cytoplasmic. A helical transmembrane segment spans residues 98–127 (NQRHLNKLNNAATILVFITVVINIFITAFG). Residue K104 coordinates cholesterol. Residues 128 to 143 (AHHAASMAARTSSNPI) lie on the Extracellular side of the membrane.

This sequence belongs to the ninjurin family. As to quaternary structure, homooligomer; in response to stimuli, homooligomerizes into filaments. In contrast to NINJ1, the filament is curved toward the intracellular space, preventing its circularization on a relatively flat membrane to mediate plasma membrane rupture: curvature is caused by cholesterol-binding at the cytoplasmic leaflet.

The protein localises to the cell membrane. Functionally, its role in unclear. In contrast to NINJ1 paralog, does not mediate plasma membrane rupture (cytolysis) downstream of necroptotic and pyroptotic programmed cell death. While it is able to oligomerize and form filaments, filaments are curved toward the intracellular space, preventing circularization to mediate plasma membrane rupture. May act as a homophilic transmembrane adhesion molecule involved in nerve regeneration. Promotes axonal growth. In Mus musculus (Mouse), this protein is Ninjurin-2 (Ninj2).